A 236-amino-acid polypeptide reads, in one-letter code: Aspartate/glutamate leucyltransferase (236 aa).

Belongs to the R-transferase family. Bpt subfamily.

It localises to the cytoplasm. It catalyses the reaction N-terminal L-glutamyl-[protein] + L-leucyl-tRNA(Leu) = N-terminal L-leucyl-L-glutamyl-[protein] + tRNA(Leu) + H(+). It carries out the reaction N-terminal L-aspartyl-[protein] + L-leucyl-tRNA(Leu) = N-terminal L-leucyl-L-aspartyl-[protein] + tRNA(Leu) + H(+). Functions in the N-end rule pathway of protein degradation where it conjugates Leu from its aminoacyl-tRNA to the N-termini of proteins containing an N-terminal aspartate or glutamate. The protein is Aspartate/glutamate leucyltransferase of Saccharophagus degradans (strain 2-40 / ATCC 43961 / DSM 17024).